A 391-amino-acid chain; its full sequence is MDGAARRGVLAALLACGLLLLGAAATPTPPPAGSSPQDTCTSCGFRRPEEPGKVDGDFLEAVKRHILSRLQMRDRPNITHAVPKAAMVTALRKLHAGKVREDGRVEIPSLDGQASAGPPAHDPVSEIISFAETDDLASSRVRLYFFISNEGNQNLFVVQASLWLYLKLLPYVLEKGSRRKVRVKVYFQDPDTSNKWNVVEKKVDLKRSGWHTFPMTEAIQALFERGERRLNLDVQCEGCEEYSVLPIYVDPGEESHRPFLVVQARLADNKHRIRKRGLECDGRTNLCCRQQFYIDFRLIGWNDWIIAPSGYYGNYCEGSCPAYLAGVPGSASSFHTAVVNQYRMRGLNPGTVNSCCIPTKLSTMSMLYFDDEYNIVKRDVPNMIVEECGCA.

The first 25 residues, 1–25 (MDGAARRGVLAALLACGLLLLGAAA), serve as a signal peptide directing secretion. The propeptide occupies 26–276 (TPTPPPAGSS…ADNKHRIRKR (251 aa)). The disordered stretch occupies residues 27–47 (PTPPPAGSSPQDTCTSCGFRR). N-linked (GlcNAc...) asparagine glycosylation is present at N77. 4 disulfides stabilise this stretch: C280–C288, C287–C356, C316–C388, and C320–C390.

The protein belongs to the TGF-beta family. As to quaternary structure, dimeric, linked by one or more disulfide bonds. Inhibin A is a dimer of alpha and beta-A. Inhibin B is a dimer of alpha and beta-B. Activin A is a homodimer of beta-A. Activin B is a homodimer of beta-B. Activin AB is a dimer of beta-A and beta-B.

It is found in the secreted. Functionally, inhibins and activins inhibit and activate, respectively, the secretion of follitropin by the pituitary gland. Inhibins/activins are involved in regulating a number of diverse functions such as hypothalamic and pituitary hormone secretion, gonadal hormone secretion, germ cell development and maturation, erythroid differentiation, insulin secretion, nerve cell survival, embryonic axial development or bone growth, depending on their subunit composition. Inhibins appear to oppose the functions of activins. This Gallus gallus (Chicken) protein is Inhibin beta B chain (INHBB).